A 221-amino-acid chain; its full sequence is NEDD4 family-interacting protein 1 (221 aa).

At Ala-2 the chain carries N-acetylalanine. Positions 2-41 (ALALAALAAVEPACGSRYQQLQNEEESGEPEQAAGDAPPP) are interaction with UBE2L3. Topologically, residues 2–116 (ALALAALAAV…ADQLRIGNDG (115 aa)) are cytoplasmic. Residues 18 to 45 (RYQQLQNEEESGEPEQAAGDAPPPYSSI) form a disordered region. 3 short sequence motifs (PPxY motif) span residues 39-42 (PPPY), 64-67 (PPSY), and 74-76 (PSY). The tract at residues 42-76 (YSSISAESAAYFDYKDESGFPKPPSYNVATTLPSY) is interaction with ITCH. The chain crosses the membrane as a helical span at residues 117–137 (IFMLTFFMAFLFNWIGFFLSF). At 138-143 (CLTTSA) the chain is on the extracellular side. Residues 144–164 (AGRYGAISGFGLSLIKWILIV) traverse the membrane as a helical segment. Residues 165 to 172 (RFSTYFPG) are Cytoplasmic-facing. The chain crosses the membrane as a helical span at residues 173-193 (YFDGQYWLWWVFLVLGFLLFL). Residues 194–221 (RGFINYAKVRKMPETFSNLPRTRVLFIY) are Extracellular-facing.

Forms heterodimers with NDFIP2. Interacts with several E3 ubiquitin-protein ligases, including ITCH, NEDD4, NEDD4L and WWP2. The interaction with NEDD4, NEDD4L and ITCH leads to relocalization of these proteins to exosomes and eventually to exosomal secretion. Interacts with U2SURP. Interacts with SLC11A2/DMT1. Interacts with PTEN. May interact with phosphorylated EGFR. Interacts with BRAT1. Interacts with KCNH2. Interacts with MAVS. Part of a complex containing ITCH, NDFIP1 and MAP3K7. Interacts (via N-terminus) with UBE2L3; the interaction mediates recruitment of UBE2L3 to ITCH. Post-translationally, ubiquitinated by NEDD4 and ITCH; mono-, di- and polyubiquitinated forms are detected. Ubiquitination regulates its degradation. Undergoes transient tyrosine phosphorylation following EGF stimulation, most probably by catalyzed by SRC. Phosphorylation SRC is enhanced in the presence of NDFIP2 which may act as a scaffold to recruit SRC to NDFIP1. Widely expressed. Higher levels are detected in cerebellum, pituitary, thalamus, kidney, liver, testis, salivary glands and placenta. Also expressed in fetal brain, kidney and lung.

The protein resides in the endosome membrane. It is found in the golgi apparatus membrane. Its subcellular location is the synapse. The protein localises to the synaptosome. It localises to the cell projection. The protein resides in the dendrite. It is found in the secreted. In terms of biological role, activates HECT domain-containing E3 ubiquitin-protein ligases, including NEDD4 and ITCH, and consequently modulates the stability of their targets. As a result, controls many cellular processes. Prevents chronic T-helper cell-mediated inflammation by activating ITCH and thus controlling JUNB degradation. Promotes pancreatic beta cell death through degradation of JUNB and inhibition of the unfolded protein response, leading to reduction of insulin secretion. Restricts the production of pro-inflammatory cytokines in effector Th17 T-cells by promoting ITCH-mediated ubiquitination and degradation of RORC. Together with NDFIP2, limits the cytokine signaling and expansion of effector Th2 T-cells by promoting degradation of JAK1, probably by ITCH- and NEDD4L-mediated ubiquitination. Regulates peripheral T-cell tolerance to self and foreign antigens, forcing the exit of naive CD4+ T-cells from the cell cycle before they become effector T-cells. Negatively regulates RLR-mediated antiviral response by promoting SMURF1-mediated ubiquitination and subsequent degradation of MAVS. Negatively regulates KCNH2 potassium channel activity by decreasing its cell-surface expression and interfering with channel maturation through recruitment of NEDD4L to the Golgi apparatus where it mediates KCNH2 degradation. In cortical neurons, mediates the ubiquitination of the divalent metal transporter SLC11A2/DMT1 by NEDD4L, leading to its down-regulation and protection of the cells from cobalt and iron toxicity. Important for normal development of dendrites and dendritic spines in cortex. Enhances the ubiquitination of BRAT1 mediated by: NEDD4, NEDD4L and ITCH and is required for the nuclear localization of ubiquitinated BRAT1. Enhances the ITCH-mediated ubiquitination of MAP3K7 by recruiting E2 ubiquitin-conjugating enzyme UBE2L3 to ITCH. Modulates EGFR signaling through multiple pathways. In particular, may regulate the ratio of AKT1-to-MAPK8 signaling in response to EGF, acting on AKT1 probably through PTEN destabilization and on MAPK8 through ITCH-dependent MAP2K4 inactivation. As a result, may control cell growth rate. Inhibits cell proliferation by promoting PTEN nuclear localization and changing its signaling specificity. The polypeptide is NEDD4 family-interacting protein 1 (NDFIP1) (Homo sapiens (Human)).